The sequence spans 365 residues: Anhydro-N-acetylmuramic acid kinase (365 aa).

12–19 (GTSMDGMD) lines the ATP pocket.

It belongs to the anhydro-N-acetylmuramic acid kinase family.

The catalysed reaction is 1,6-anhydro-N-acetyl-beta-muramate + ATP + H2O = N-acetyl-D-muramate 6-phosphate + ADP + H(+). The protein operates within amino-sugar metabolism; 1,6-anhydro-N-acetylmuramate degradation. It participates in cell wall biogenesis; peptidoglycan recycling. Catalyzes the specific phosphorylation of 1,6-anhydro-N-acetylmuramic acid (anhMurNAc) with the simultaneous cleavage of the 1,6-anhydro ring, generating MurNAc-6-P. Is required for the utilization of anhMurNAc either imported from the medium or derived from its own cell wall murein, and thus plays a role in cell wall recycling. The protein is Anhydro-N-acetylmuramic acid kinase of Pseudomonas paraeruginosa (strain DSM 24068 / PA7) (Pseudomonas aeruginosa (strain PA7)).